The primary structure comprises 186 residues: Putative manganese efflux pump MntP (186 aa).

6 consecutive transmembrane segments (helical) span residues 1-21, 41-61, 71-91, 105-125, 130-150, and 165-185; these read MSFL…FAVS, VFFG…GSAV, WIAF…ALYG, LLML…SFAF, ILEP…CGAV, and IIGG…HLLW.

This sequence belongs to the MntP (TC 9.B.29) family.

The protein resides in the cell membrane. Functionally, probably functions as a manganese efflux pump. This Methanosarcina barkeri (strain Fusaro / DSM 804) protein is Putative manganese efflux pump MntP.